A 456-amino-acid polypeptide reads, in one-letter code: F-box/FBD/LRR-repeat protein At3g52680 (456 aa).

Residues 20-73 enclose the F-box domain; the sequence is KDRISELPDGLLLKILSSLPTNIVVATSVLSKQWRSLWKLVPNLEFDSDDYESE. 7 LRR repeats span residues 74–100, 102–127, 152–179, 180–205, 225–252, 270–295, and 318–344; these read HYTF…RLKF, NFNP…VLDF, TLKL…HLEF, VRYK…RLYR, TIHD…LIEE, IAEV…LLNL, and TREA…KLTD. One can recognise an FBD domain in the interval 358–409; that stretch reads KWNEPKDVPECLLSQLETFVWRRFDWGREEEKEIATYILKNGRRLKKATFST.

The chain is F-box/FBD/LRR-repeat protein At3g52680 from Arabidopsis thaliana (Mouse-ear cress).